The sequence spans 231 residues: Chlorophyll a-b binding protein 1B-20, chloroplastic (231 aa).

A disordered region spans residues 1-25 (RIQAYRFRTRVPPSPAASGSPRSTR). Residues 1 to 31 (RIQAYRFRTRVPPSPAASGSPRSTRRDVAVQ) constitute a chloroplast transit peptide. Trp36 is a chlorophyll b binding site. Phe56 lines the chlorophyll a pocket. 4 residues coordinate chlorophyll b: Arg80, Ser118, Glu133, and Arg136. Positions 182, 183, 186, 188, 200, and 215 each coordinate chlorophyll a. Residues 183–199 (ELANGRLAMLAFLGFLV) traverse the membrane as a helical segment.

The protein belongs to the light-harvesting chlorophyll a/b-binding (LHC) protein family. As to quaternary structure, the LHC complex consists of chlorophyll a-b binding proteins. Binds at least 14 chlorophylls (8 Chl-a and 6 Chl-b) and carotenoids such as lutein and neoxanthin. is required as a cofactor. Post-translationally, photoregulated by reversible phosphorylation of its threonine residues.

Its subcellular location is the plastid. The protein resides in the chloroplast thylakoid membrane. Its function is as follows. The light-harvesting complex (LHC) functions as a light receptor, it captures and delivers excitation energy to photosystems with which it is closely associated. In Hordeum vulgare (Barley), this protein is Chlorophyll a-b binding protein 1B-20, chloroplastic (LHC Ib-20).